The primary structure comprises 261 residues: tRNA U34 carboxymethyltransferase (261 aa).

Carboxy-S-adenosyl-L-methionine is bound by residues K25, W39, K44, G63, 114 to 115 (VE), Y135, and R250.

It belongs to the class I-like SAM-binding methyltransferase superfamily. CmoB family. Homotetramer.

It catalyses the reaction carboxy-S-adenosyl-L-methionine + 5-hydroxyuridine(34) in tRNA = 5-carboxymethoxyuridine(34) in tRNA + S-adenosyl-L-homocysteine + H(+). Catalyzes carboxymethyl transfer from carboxy-S-adenosyl-L-methionine (Cx-SAM) to 5-hydroxyuridine (ho5U) to form 5-carboxymethoxyuridine (cmo5U) at position 34 in tRNAs. This Helicobacter pylori (strain J99 / ATCC 700824) (Campylobacter pylori J99) protein is tRNA U34 carboxymethyltransferase.